Reading from the N-terminus, the 106-residue chain is Putative membrane protein insertion efficiency factor (106 aa).

Belongs to the UPF0161 family.

Its subcellular location is the cell inner membrane. Functionally, could be involved in insertion of integral membrane proteins into the membrane. This chain is Putative membrane protein insertion efficiency factor, found in Acinetobacter baumannii (strain SDF).